We begin with the raw amino-acid sequence, 551 residues long: Inosine-5'-monophosphate dehydrogenase (551 aa).

CBS domains are found at residues 102 to 163 (FILD…PLSE) and 165 to 221 (MTSD…PLAS). NAD(+) is bound by residues 258-260 (DSS) and 308-310 (GMG). K(+) contacts are provided by glycine 310 and glycine 312. IMP is bound at residue serine 313. Position 315 (cysteine 315) interacts with K(+). Cysteine 315 serves as the catalytic Thioimidate intermediate. IMP contacts are provided by residues 349 to 351 (DGG), 372 to 373 (GS), and 396 to 400 (YRGMG). The interval 407 to 462 (AGTRRTASPPARGLRSPEASPSTAASSGGASRASALSEASPSAKSEASRTSTSTGS) is disordered. Residues 422-462 (SPEASPSTAASSGGASRASALSEASPSAKSEASRTSTSTGS) are compositionally biased toward low complexity. Arginine 465 (proton acceptor) is an active-site residue. Position 477 (glutamine 477) interacts with IMP. Residues glutamate 536 and glycine 537 each contribute to the K(+) site.

It belongs to the IMPDH/GMPR family. Homotetramer. K(+) serves as cofactor.

The protein localises to the cytoplasm. The enzyme catalyses IMP + NAD(+) + H2O = XMP + NADH + H(+). Its pathway is purine metabolism; XMP biosynthesis via de novo pathway; XMP from IMP: step 1/1. With respect to regulation, mycophenolic acid (MPA) is a non-competitive inhibitor that prevents formation of the closed enzyme conformation by binding to the same site as the amobile flap. In contrast, mizoribine monophosphate (MZP) is a competitive inhibitor that induces the closed conformation. MPA is a potent inhibitor of mammalian IMPDHs but a poor inhibitor of the bacterial enzymes. MZP is a more potent inhibitor of bacterial IMPDH. Potently inhibited by MPA and adenine dinucleotide analogs such as thiazole-4-carboxamide adenine dinucleotide (TAD). In terms of biological role, catalyzes the conversion of inosine 5'-phosphate (IMP) to xanthosine 5'-phosphate (XMP), the first committed and rate-limiting step in the de novo synthesis of guanine nucleotides, and therefore plays an important role in the regulation of cell growth. This chain is Inosine-5'-monophosphate dehydrogenase, found in Toxoplasma gondii.